Reading from the N-terminus, the 544-residue chain is Protein angel homolog 2 (544 aa).

It belongs to the CCR4/nocturin family.

The sequence is that of Protein angel homolog 2 (ANGEL2) from Homo sapiens (Human).